Here is a 1564-residue protein sequence, read N- to C-terminus: Tetratricopeptide repeat protein 37 (1564 aa).

TPR repeat units follow at residues Val-6 to Asn-39, Tyr-40 to Gln-73, Leu-75 to Ser-110, Tyr-116 to Glu-149, Ile-237 to Asn-271, Pro-306 to Asp-339, Ala-420 to Asn-453, Tyr-456 to Met-492, Ser-493 to Asp-527, Lys-564 to Asp-597, Ser-598 to Ser-631, Tyr-633 to Tyr-665, Met-678 to Leu-713, Leu-743 to Ala-776, Val-861 to Tyr-894, Arg-980 to Arg-1013, Asn-1020 to Glu-1050, Phe-1051 to Asp-1084, and His-1400 to Gln-1433.

This is Tetratricopeptide repeat protein 37 (ttc37) from Xenopus laevis (African clawed frog).